Here is a 266-residue protein sequence, read N- to C-terminus: Glucosamine-6-phosphate deaminase (266 aa).

The active-site Proton acceptor; for enolization step is the aspartate 72. Aspartate 141 acts as the For ring-opening step in catalysis. The Proton acceptor; for ring-opening step role is filled by histidine 143. Glutamate 148 acts as the For ring-opening step in catalysis.

This sequence belongs to the glucosamine/galactosamine-6-phosphate isomerase family. NagB subfamily. In terms of assembly, homohexamer.

It carries out the reaction alpha-D-glucosamine 6-phosphate + H2O = beta-D-fructose 6-phosphate + NH4(+). It participates in amino-sugar metabolism; N-acetylneuraminate degradation; D-fructose 6-phosphate from N-acetylneuraminate: step 5/5. Its activity is regulated as follows. Allosterically activated by N-acetylglucosamine 6-phosphate (GlcNAc6P). In terms of biological role, catalyzes the reversible isomerization-deamination of glucosamine 6-phosphate (GlcN6P) to form fructose 6-phosphate (Fru6P) and ammonium ion. This chain is Glucosamine-6-phosphate deaminase, found in Vibrio vulnificus (strain CMCP6).